The sequence spans 426 residues: Putative glutamate--cysteine ligase 2 (426 aa).

The protein belongs to the glutamate--cysteine ligase type 2 family. YbdK subfamily.

The catalysed reaction is L-cysteine + L-glutamate + ATP = gamma-L-glutamyl-L-cysteine + ADP + phosphate + H(+). ATP-dependent carboxylate-amine ligase which exhibits weak glutamate--cysteine ligase activity. In Bradyrhizobium diazoefficiens (strain JCM 10833 / BCRC 13528 / IAM 13628 / NBRC 14792 / USDA 110), this protein is Putative glutamate--cysteine ligase 2.